A 407-amino-acid polypeptide reads, in one-letter code: Peptidase T (407 aa).

His82 contacts Zn(2+). Asp84 is an active-site residue. Asp143 is a binding site for Zn(2+). Residue Glu177 is the Proton acceptor of the active site. 3 residues coordinate Zn(2+): Glu178, Asp200, and His382.

Belongs to the peptidase M20B family. The cofactor is Zn(2+).

It localises to the cytoplasm. It catalyses the reaction Release of the N-terminal residue from a tripeptide.. Cleaves the N-terminal amino acid of tripeptides. This is Peptidase T from Streptococcus uberis (strain ATCC BAA-854 / 0140J).